A 447-amino-acid chain; its full sequence is F-box only protein 5 (447 aa).

Phosphoserine occurs at positions 94 and 102. The interval 135 to 244 is interaction with EVI5; it reads ALETSRLYED…IGRKMGLECV (110 aa). Residues 250–296 form the F-box domain; sequence LFRRGLRHVLATILAQLSDMDLINVSKVSTTWKKILEDDKGAFQLYS. The segment at 261 to 339 is sufficient for interaction with RPS6KA2; Prevents association of CDC20 with RPS6KA2; that stretch reads TILAQLSDMD…KSAAQTSLKK (79 aa). Residues 261-409 are requires for efficient binding to CDC20; sequence TILAQLSDMD…GCGFDYCTKC (149 aa). Residues 305 to 447 form an inhibits APC ubiquitin ligase activity region; that stretch reads NNNKFSPHAS…KKSKKNLRRL (143 aa). The competitively blocks access of APC substrates to the D-box coreceptor formed by FZR1 and ANAPC10 stretch occupies residues 322 to 325; sequence RTPL. The interval 337-358 is disordered; sequence LKKDAQTKLSNQGDQKGSTYSR. Positions 343–357 are enriched in polar residues; that stretch reads TKLSNQGDQKGSTYS. The ZBR-type zinc finger occupies 374-422; sequence SLKACIRCNSPAKYDCYLQRATCKREGCGFDYCTKCLCNYHTTKDCSDG. Residues Cys-378, Cys-381, Cys-396, Cys-401, Cys-406, Cys-409, His-414, and Cys-419 each contribute to the Zn(2+) site. Residues 378–420 form an allows a rapid multiple mono-ubiquitination of the APC substrate, but strongly inhibits the slow ubiquitin chain elongation catalyzed by UBCH10 region; sequence CIRCNSPAKYDCYLQRATCKREGCGFDYCTKCLCNYHTTKDCS. The sufficient to suppress UBE2S activity; essential for interaction with UBE2S; competitively inhibits the rapide ubiquitin chain elongation by UBE2D1 which blocks UBE2D1 with APC; indispensable for recruitment and position of FBXO5 to the catalytic site of APC; abrogates the inhibition of ubiquitin chain assembly primarily catalyzed by UBE2S; inhibits the ubiquitination by either UBE2C or UBE2D1 stretch occupies residues 437-447; it reads TKKSKKNLRRL.

Part of a SCF (SKP1-cullin-F-box) protein ligase complex. Interacts with BTRC; mediates proteolysis by the SCF ubiquitin ligase complex leading to activation of APC in late mitosis and subsequent mitotic progression. Interacts with FZR1/CDH1 and the N-terminal substrate-binding domain of CDC20; prevents APC activation. Also interacts with EVI5 which blocks its phosphorylation by PLK1 and prevents its subsequent binding to BTRC and degradation. Interacts simultaneously with anaphase promoting complex (APC), through at least ANAPC2, CDC23, CDC27, the APC substrate GMNN and the APC activator FZR1. Interacts with UBE2S; interferes with the activity of UBE2S mainly by disrupting the dynamic electrostatic association between the C-terminal tail of UBE2S and ANAPC2. Interacts with RPS6KA2; cooperates to induce the metaphase arrest of early blastomeres; increases and stabilizes interaction of FBXO5 with CDC20. Post-translationally, phosphorylation by CDK2 and subsequently by PLK1 triggers degradation during early mitosis through ubiquitin-mediated proteolysis by the SCF ubiquitin ligase complex containing the F-box protein BTRC. This degradation is necessary for the activation of APC in late mitosis and subsequent mitotic progression. Phosphorylated by RPS6KA2; increases and stabilizes interaction with CDC20. In terms of processing, ubiquitinated by the SCF(BTRC) complex following phosphorylation by PLK1. Undergoes both 'Lys-11' and 'Lys-48'-linked polyubiquitination by APC-FZR1 complex leading to degradation by proteasome during G1 phase. Degraded through the SCF(BTRC) complex; degradation occurs during oocyte maturation, between germinal vesicle breakdown (GVBD) and meiosis I, and is required for the meiosis I-meiosis II transition.

It is found in the nucleus. Its subcellular location is the cytoplasm. The protein localises to the cytoskeleton. It localises to the spindle. It functions in the pathway protein modification; protein ubiquitination. In terms of biological role, regulator of APC activity during mitotic and meiotic cell cycle. During mitotic cell cycle plays a role as both substrate and inhibitor of APC-FZR1 complex. During G1 phase, plays a role as substrate of APC-FZR1 complex E3 ligase. Then switches as an inhibitor of APC-FZR1 complex during S and G2 leading to cell-cycle commitment. As APC inhibitor, prevents the degradation of APC substrates at multiple levels: by interacting with APC and blocking access of APC substrates to the D-box coreceptor, formed by FZR1 and ANAPC10; by suppressing ubiquitin ligation and chain elongation by APC by preventing the UBE2C and UBE2S activities. Plays a role in genome integrity preservation by coordinating DNA replication with mitosis through APC inhibition in interphase to stabilize CCNA2 and GMNN in order to promote mitosis and prevent rereplication and DNA damage-induced cellular senescence. During oocyte maturation, plays a role in meiosis through inactivation of APC-FZR1 complex. Inhibits APC through RPS6KA2 interaction that increases FBXO5 affiniy for CDC20 leading to the metaphase arrest of the second meiotic division before fertilization. Controls entry into the first meiotic division through inactivation of APC-FZR1 complex. Promotes migration and osteogenic differentiation of mesenchymal stem cells. The polypeptide is F-box only protein 5 (Homo sapiens (Human)).